Here is a 592-residue protein sequence, read N- to C-terminus: Guanylate-binding protein 1 (592 aa).

The segment at 1 to 311 (MASEIHMTGP…NAISSGDLPC (311 aa)) is GTPase domain (Globular). The GB1/RHD3-type G domain maps to 35–278 (TQPMVVVAIV…FCSYIFSNSK (244 aa)). GTP is bound by residues 45–52 (GLYRTGKS), 67–69 (LGS), and 97–101 (DTEGL). Residue serine 156 is modified to Phosphoserine. Cysteine 589 is modified (cysteine methyl ester). Residue cysteine 589 is the site of S-farnesyl cysteine attachment. A Phosphothreonine modification is found at threonine 590. Residues 590-592 (TIS) constitute a propeptide, removed in mature form.

Belongs to the TRAFAC class dynamin-like GTPase superfamily. GB1/RHD3 GTPase family. GB1 subfamily. Homodimer; homodimerization occurs upon GTP-binding and is required for the second hydrolysis step from GDP to GMP. Undergoes conformational changes and oligomerization upon GTP-binding and hydrolysis. Heterodimer with other family members, including GBP2, GBP3, GBP4 and GBP5. Dimerization regulates subcellular location to membranous structures. Interacts with SQSTM1. Interacts (when phosphorylated) with 14-3-3 protein sigma (SFN); leading to GBP1 retention in the cytosol and inactivation. Post-translationally, isoprenylation is required for proper subcellular location. In terms of processing, phosphorylated at Ser-156 by PIM1 in absence of infection, inhibits GBP1: phosphorylation promotes interaction with 14-3-3 protein sigma (SFN), leading to GBP1 retention in the cytosol. Dephosphorylated in response to infection, liberating GBP1.

The protein localises to the cytoplasmic vesicle membrane. The protein resides in the golgi apparatus membrane. It localises to the cell membrane. Its subcellular location is the cytoplasm. It is found in the cytosol. The protein localises to the secreted. The enzyme catalyses GTP + H2O = GDP + phosphate + H(+). The catalysed reaction is GDP + H2O = GMP + phosphate + H(+). Interferon (IFN)-inducible GTPase that plays important roles in innate immunity against a diverse range of bacterial, viral and protozoan pathogens. Hydrolyzes GTP to GMP in two consecutive cleavage reactions: GTP is first hydrolyzed to GDP and then to GMP in a processive manner. Following infection, recruited to the pathogen-containing vacuoles or vacuole-escaped bacteria and promotes both inflammasome assembly and autophagy. Acts as a positive regulator of inflammasome assembly by facilitating the detection of inflammasome ligands from pathogens. Involved in the lysis of pathogen-containing vacuoles, releasing pathogens into the cytosol. Following pathogen release in the cytosol, forms a protein coat in a GTPase-dependent manner that encapsulates pathogens and promotes the detection of ligands by pattern recognition receptors. Plays a key role in inflammasome assembly in response to infection by Gram-negative bacteria: following pathogen release in the cytosol, forms a protein coat that encapsulates Gram-negative bacteria and directly binds to lipopolysaccharide (LPS), disrupting the O-antigen barrier and unmasking lipid A that is that detected by the non-canonical inflammasome effector CASP4/CASP11. Also promotes recruitment of proteins that mediate bacterial cytolysis, leading to release double-stranded DNA (dsDNA) that activates the AIM2 inflammasome. Involved in autophagy by regulating bacteriolytic peptide generation via its interaction with ubiquitin-binding protein SQSTM1, which delivers monoubiquitinated proteins to autolysosomes for the generation of bacteriolytic peptides. Confers protection to several pathogens, including the bacterial pathogens L.monocytogenes and M.bovis BCG as well as the protozoan pathogen T.gondii. Exhibits antiviral activity against influenza virus. This Pongo abelii (Sumatran orangutan) protein is Guanylate-binding protein 1 (GBP1).